The sequence spans 309 residues: MVKIYAPASIGNVSVGFDVLGAAVSPVDGSLLGDCVSVEAADLFSLRNEGRFVSKLPDNPKENIVYQCWELFCQEIGKTVPVAMTLEKNMPIGSGLGSSACSVVAGLMAMNEFCGKPLDDTRLLRLMGELEGRISGSVHYDNVAPCFLGGVQLMLEENGIISQPVPSFDDWLWVMAYPGIKVSTAEARAILPAQYRRQDCISHGRYLAGFIHACHTGQAELAAKLMKDVIAEPYRTKLLPGFAAARQAAEDIGALACGISGSGPTLFSVCNDMASAQRLADWLRDNYLQNDEGFVHICRLDKTGARQLG.

91–101 (PIGSGLGSSAC) is a binding site for ATP.

The protein belongs to the GHMP kinase family. Homoserine kinase subfamily.

Its subcellular location is the cytoplasm. The enzyme catalyses L-homoserine + ATP = O-phospho-L-homoserine + ADP + H(+). It participates in amino-acid biosynthesis; L-threonine biosynthesis; L-threonine from L-aspartate: step 4/5. Functionally, catalyzes the ATP-dependent phosphorylation of L-homoserine to L-homoserine phosphate. This Pectobacterium atrosepticum (strain SCRI 1043 / ATCC BAA-672) (Erwinia carotovora subsp. atroseptica) protein is Homoserine kinase.